Reading from the N-terminus, the 169-residue chain is S-ribosylhomocysteine lyase (169 aa).

The Fe cation site is built by histidine 54, histidine 58, and cysteine 128.

This sequence belongs to the LuxS family. As to quaternary structure, homodimer. Fe cation serves as cofactor.

The catalysed reaction is S-(5-deoxy-D-ribos-5-yl)-L-homocysteine = (S)-4,5-dihydroxypentane-2,3-dione + L-homocysteine. Involved in the synthesis of autoinducer 2 (AI-2) which is secreted by bacteria and is used to communicate both the cell density and the metabolic potential of the environment. The regulation of gene expression in response to changes in cell density is called quorum sensing. Catalyzes the transformation of S-ribosylhomocysteine (RHC) to homocysteine (HC) and 4,5-dihydroxy-2,3-pentadione (DPD). This Shewanella woodyi (strain ATCC 51908 / MS32) protein is S-ribosylhomocysteine lyase.